A 116-amino-acid polypeptide reads, in one-letter code: uncharacterized protein (116 aa).

The RRM domain maps to 6–83 (ATVHVGNLAP…RCIRVSPANF (78 aa)).

The protein localises to the cytoplasm. The protein resides in the nucleus. This is an uncharacterized protein from Schizosaccharomyces pombe (strain 972 / ATCC 24843) (Fission yeast).